Here is a 291-residue protein sequence, read N- to C-terminus: 4-diphosphocytidyl-2-C-methyl-D-erythritol kinase (291 aa).

The active site involves Lys-11. 94 to 104 (PAGSGLGGGSA) is a binding site for ATP. Residue Asp-136 is part of the active site.

Belongs to the GHMP kinase family. IspE subfamily.

It carries out the reaction 4-CDP-2-C-methyl-D-erythritol + ATP = 4-CDP-2-C-methyl-D-erythritol 2-phosphate + ADP + H(+). Its pathway is isoprenoid biosynthesis; isopentenyl diphosphate biosynthesis via DXP pathway; isopentenyl diphosphate from 1-deoxy-D-xylulose 5-phosphate: step 3/6. Catalyzes the phosphorylation of the position 2 hydroxy group of 4-diphosphocytidyl-2C-methyl-D-erythritol. The chain is 4-diphosphocytidyl-2-C-methyl-D-erythritol kinase from Treponema pallidum (strain Nichols).